We begin with the raw amino-acid sequence, 113 residues long: Cell cycle protein GpsB (113 aa).

Residues L32 to A71 are a coiled coil.

The protein belongs to the GpsB family. Forms polymers through the coiled coil domains. Interacts with PBP1, MreC and EzrA.

The protein localises to the cytoplasm. In terms of biological role, divisome component that associates with the complex late in its assembly, after the Z-ring is formed, and is dependent on DivIC and PBP2B for its recruitment to the divisome. Together with EzrA, is a key component of the system that regulates PBP1 localization during cell cycle progression. Its main role could be the removal of PBP1 from the cell pole after pole maturation is completed. Also contributes to the recruitment of PBP1 to the division complex. Not essential for septum formation. This chain is Cell cycle protein GpsB, found in Lactiplantibacillus plantarum (strain ATCC BAA-793 / NCIMB 8826 / WCFS1) (Lactobacillus plantarum).